The chain runs to 563 residues: Arginine--tRNA ligase (563 aa).

The short motif at 121–131 (PNIAKPFSIGH) is the 'HIGH' region element.

This sequence belongs to the class-I aminoacyl-tRNA synthetase family. In terms of assembly, monomer.

It localises to the cytoplasm. The enzyme catalyses tRNA(Arg) + L-arginine + ATP = L-arginyl-tRNA(Arg) + AMP + diphosphate. This is Arginine--tRNA ligase from Streptococcus pyogenes serotype M49 (strain NZ131).